A 300-amino-acid chain; its full sequence is MTEVVMFRGSMVAMVTPMKAQDGIRDAVDEKALKQLVEYHVEQGSDAIVAVGTTGESATLDYEEHRDVIRATVEAAAGRIPVIGGTGANSTWEAIELTRSAMEAGCDAALLVVPYYNKPTQEGLVQHFSAIAEAVPIPQILYNVPGRTGCDMLPETVERLADLPNVVGLKEAQGTVERAEEVIRRCGDRLDVFAGDDFNALGMMRVGGKGVISVSANVVPRQMHDLCAAALAGDMQTAEAINERLTPLHQAMFCEPNPVPVKWAVEELGMAGSGMRLPMTRLTEAGQARVRQAMQDAGLL.

Residue Thr54 coordinates pyruvate. Catalysis depends on Tyr142, which acts as the Proton donor/acceptor. The active-site Schiff-base intermediate with substrate is the Lys170. Residue Ile212 participates in pyruvate binding.

This sequence belongs to the DapA family. As to quaternary structure, homotetramer; dimer of dimers.

The protein localises to the cytoplasm. The catalysed reaction is L-aspartate 4-semialdehyde + pyruvate = (2S,4S)-4-hydroxy-2,3,4,5-tetrahydrodipicolinate + H2O + H(+). The protein operates within amino-acid biosynthesis; L-lysine biosynthesis via DAP pathway; (S)-tetrahydrodipicolinate from L-aspartate: step 3/4. Functionally, catalyzes the condensation of (S)-aspartate-beta-semialdehyde [(S)-ASA] and pyruvate to 4-hydroxy-tetrahydrodipicolinate (HTPA). This Halorhodospira halophila (strain DSM 244 / SL1) (Ectothiorhodospira halophila (strain DSM 244 / SL1)) protein is 4-hydroxy-tetrahydrodipicolinate synthase.